A 481-amino-acid chain; its full sequence is Cysteine--tRNA ligase (481 aa).

Cysteine 43 lines the Zn(2+) pocket. The short motif at 45–55 is the 'HIGH' region element; sequence ATVQGLPHIGH. Cysteine 221, histidine 246, and glutamate 250 together coordinate Zn(2+). The short motif at 277–281 is the 'KMSKS' region element; sequence KMSKS. Position 280 (lysine 280) interacts with ATP.

It belongs to the class-I aminoacyl-tRNA synthetase family. As to quaternary structure, monomer. It depends on Zn(2+) as a cofactor.

It localises to the cytoplasm. The enzyme catalyses tRNA(Cys) + L-cysteine + ATP = L-cysteinyl-tRNA(Cys) + AMP + diphosphate. The chain is Cysteine--tRNA ligase from Mycobacterium sp. (strain KMS).